A 487-amino-acid chain; its full sequence is Proline--tRNA ligase (487 aa).

The protein belongs to the class-II aminoacyl-tRNA synthetase family. ProS type 3 subfamily. As to quaternary structure, homodimer.

It is found in the cytoplasm. The enzyme catalyses tRNA(Pro) + L-proline + ATP = L-prolyl-tRNA(Pro) + AMP + diphosphate. Its function is as follows. Catalyzes the attachment of proline to tRNA(Pro) in a two-step reaction: proline is first activated by ATP to form Pro-AMP and then transferred to the acceptor end of tRNA(Pro). In Pyrobaculum neutrophilum (strain DSM 2338 / JCM 9278 / NBRC 100436 / V24Sta) (Thermoproteus neutrophilus), this protein is Proline--tRNA ligase.